The sequence spans 240 residues: Probable Ni/Fe-hydrogenase B-type cytochrome subunit (240 aa).

4 consecutive transmembrane segments (helical) span residues 31–51 (LWHWVTALSIVVLGVTGYFIG), 75–95 (FAAGYVLAIGFLGRVYWAFVG), 142–163 (LAMFCFFVVGAVFMSVTGFALY), and 196–213 (LGMWYLVVFVMVHVYLAV).

It belongs to the HupC/HyaC/HydC family.

It is found in the cell membrane. Probable b-type cytochrome. The polypeptide is Probable Ni/Fe-hydrogenase B-type cytochrome subunit (hoxZ) (Azotobacter vinelandii).